The following is a 183-amino-acid chain: Cuticle protein 2 (183 aa).

Positions 1 to 15 are cleaved as a signal peptide; it reads MKLIVVAALIGVCAG. Residues 58-121 form the Chitin-binding type R&amp;R domain; that stretch reads SQGFQYVYDT…AQGAHLPTPP (64 aa).

This Lonomia obliqua (Moth) protein is Cuticle protein 2.